We begin with the raw amino-acid sequence, 200 residues long: HTH-type transcriptional regulator Hpr (200 aa).

Residues 13–157 (AMLFSQRIAQ…MMCIVRNIYG (145 aa)) form the HTH marR-type domain. A DNA-binding region (H-T-H motif) is located at residues 63-86 (ISEIAKFGVMHVSTAFNFSKKLEE).

Homodimer.

In terms of biological role, negative regulator of protease production and sporulation. The chain is HTH-type transcriptional regulator Hpr from Geobacillus thermodenitrificans (strain NG80-2).